The primary structure comprises 56 residues: Small ribosomal subunit protein uS14 (56 aa).

Zn(2+)-binding residues include Cys-21, Cys-24, Cys-39, and Cys-42.

It belongs to the universal ribosomal protein uS14 family. Zinc-binding uS14 subfamily. Part of the 30S ribosomal subunit. The cofactor is Zn(2+).

Binds 16S rRNA, required for the assembly of 30S particles. The sequence is that of Small ribosomal subunit protein uS14 from Pyrococcus abyssi (strain GE5 / Orsay).